The following is a 157-amino-acid chain: Endoribonuclease YbeY (157 aa).

3 residues coordinate Zn(2+): His-111, His-115, and His-121.

This sequence belongs to the endoribonuclease YbeY family. Requires Zn(2+) as cofactor.

The protein resides in the cytoplasm. In terms of biological role, single strand-specific metallo-endoribonuclease involved in late-stage 70S ribosome quality control and in maturation of the 3' terminus of the 16S rRNA. The chain is Endoribonuclease YbeY from Pseudomonas entomophila (strain L48).